The following is a 126-amino-acid chain: Small ribosomal subunit protein uS13 (126 aa).

The segment at 98 to 126 (PLRGQSTKNNARTRKGKKKTVANKKKATK) is disordered. Residues 108–126 (ARTRKGKKKTVANKKKATK) are compositionally biased toward basic residues.

This sequence belongs to the universal ribosomal protein uS13 family. In terms of assembly, part of the 30S ribosomal subunit. Forms a loose heterodimer with protein S19. Forms two bridges to the 50S subunit in the 70S ribosome.

Located at the top of the head of the 30S subunit, it contacts several helices of the 16S rRNA. In the 70S ribosome it contacts the 23S rRNA (bridge B1a) and protein L5 of the 50S subunit (bridge B1b), connecting the 2 subunits; these bridges are implicated in subunit movement. Contacts the tRNAs in the A and P-sites. This Parabacteroides distasonis (strain ATCC 8503 / DSM 20701 / CIP 104284 / JCM 5825 / NCTC 11152) protein is Small ribosomal subunit protein uS13.